We begin with the raw amino-acid sequence, 544 residues long: Chaperonin GroEL 1 (544 aa).

ATP contacts are provided by residues 29-32, 86-90, Gly413, 482-484, and Asp498; these read TLGP, DGTTT, and NVL.

It belongs to the chaperonin (HSP60) family. Forms a cylinder of 14 subunits composed of two heptameric rings stacked back-to-back. Interacts with the co-chaperonin GroES.

It is found in the cytoplasm. It carries out the reaction ATP + H2O + a folded polypeptide = ADP + phosphate + an unfolded polypeptide.. In terms of biological role, together with its co-chaperonin GroES, plays an essential role in assisting protein folding. The GroEL-GroES system forms a nano-cage that allows encapsulation of the non-native substrate proteins and provides a physical environment optimized to promote and accelerate protein folding. In Chloroflexus aurantiacus (strain ATCC 29366 / DSM 635 / J-10-fl), this protein is Chaperonin GroEL 1.